The sequence spans 380 residues: Alkaline protease (380 aa).

The first 27 residues, 1–27, serve as a signal peptide directing secretion; it reads MKKPLGKIVASTALLISVAFSSSIASA. The propeptide occupies 28–112; it reads AEEAKEKYLI…EEDAEVTTMA (85 aa). Positions 34-111 constitute an Inhibitor I9 domain; sequence KYLIGFNEQE…IEEDAEVTTM (78 aa). Gln113 lines the Ca(2+) pocket. The region spanning 116–379 is the Peptidase S8 domain; sequence PWGISRVQAP…SGLVNAEAAT (264 aa). The active-site Charge relay system is the Asp143. Asp151 is a binding site for Ca(2+). Catalysis depends on His173, which acts as the Charge relay system. Ca(2+) is bound by residues Leu184, Asn186, Ile188, Val190, Ala274, Tyr276, and Ala279. Ser326 functions as the Charge relay system in the catalytic mechanism.

This sequence belongs to the peptidase S8 family. Ca(2+) is required as a cofactor.

It is found in the secreted. This is Alkaline protease from Alkalihalobacillus alcalophilus (Bacillus alcalophilus).